The following is a 271-amino-acid chain: Plasmanylethanolamine desaturase 1 (271 aa).

Helical transmembrane passes span 48–68 (WCCV…LLLL), 75–95 (PLVM…SGLV), and 162–182 (VLEQ…FGTF). The Histidine box-1 signature appears at 187-191 (HKWSH). A Histidine box-2 motif is present at residues 214–218 (HHRIH).

Belongs to the fatty acid desaturase CarF family.

It localises to the endoplasmic reticulum membrane. It catalyses the reaction a 1-(1,2-saturated alkyl)-2-acyl-sn-glycero-3-phosphoethanolamine + 2 Fe(II)-[cytochrome b5] + O2 + 2 H(+) = a 1-O-(1Z-alkenyl)-2-acyl-sn-glycero-3-phosphoethanolamine + 2 Fe(III)-[cytochrome b5] + 2 H2O. The enzyme catalyses a 1-O-hexadecyl-2-acyl-sn-glycero-3-phosphoethanolamine + 2 Fe(II)-[cytochrome b5] + O2 + 2 H(+) = a 1-O-(1Z-hexadecenyl)-2-acyl-sn-glycero-3-phosphoethanolamine + 2 Fe(III)-[cytochrome b5] + 2 H2O. It carries out the reaction a 1-O-octadecyl-2-acyl-sn-glycero-3-phosphoethanolamine + 2 Fe(II)-[cytochrome b5] + O2 + 2 H(+) = a 1-O-(1Z-octadecenyl)-2-acyl-sn-glycero-3-phosphoethanolamine + 2 Fe(III)-[cytochrome b5] + 2 H2O. The catalysed reaction is a 1-O-(9Z-octadecenyl)-2-acyl-sn-glycero-3-phosphoethanolamine + 2 Fe(II)-[cytochrome b5] + O2 + 2 H(+) = a 1-O-(1Z,9Z-octadecadienyl)-2-acyl-sn-glycero-3-phosphoethanolamine + 2 Fe(III)-[cytochrome b5] + 2 H2O. It participates in lipid metabolism; fatty acid metabolism. Functionally, plasmanylethanolamine desaturase involved in plasmalogen biogenesis in the endoplasmic reticulum membrane. Plasmalogens are glycerophospholipids with a hydrocarbon chain linked by a vinyl ether bond at the glycerol sn-1 position, and are involved in antioxidative and signaling mechanisms. The polypeptide is Plasmanylethanolamine desaturase 1 (Bos taurus (Bovine)).